The sequence spans 188 residues: MSAALNDLLADLTRRMDGAIESLRRDLSGLRSGRASPNLLEPVRVEAYGSEVPLSQVGSIAVPEARMLTVSVWDRTVVGAVERAIRDSGLGLNPSTDGQTVRVPIPALTEERRNELARAASRYAENGKISVRGVRRDGMEQTKALEKKSEISQDDMKTWTDAIQKLTDQYIKKVDDIFADKEREIKQV.

The protein belongs to the RRF family.

It is found in the cytoplasm. Responsible for the release of ribosomes from messenger RNA at the termination of protein biosynthesis. May increase the efficiency of translation by recycling ribosomes from one round of translation to another. The polypeptide is Ribosome-recycling factor (Gluconobacter oxydans (strain 621H) (Gluconobacter suboxydans)).